The primary structure comprises 210 residues: Vacuolar protein sorting-associated protein 28 homolog 2 (210 aa).

The VPS28 N-terminal domain occupies 1 to 99; that stretch reads MMEVKLWNDK…VTSGLPATVE (99 aa). A VPS28 C-terminal domain is found at 109–205; that stretch reads SNSASIVAEC…SSYNSFMAAL (97 aa).

This sequence belongs to the VPS28 family. In terms of assembly, component of the endosomal sorting required for transport complex I (ESCRT-I), composed of ELC, VPS28 and VPS37. Interacts with ELC.

The protein resides in the endosome. Its function is as follows. Component of the ESCRT-I complex (endosomal sorting complex required for transport I), a regulator of vesicular trafficking process. Required for the sorting of endocytic ubiquitinated cargos into multivesicular bodies (MVBs). Mediates the association to the ESCRT-0 complex. The polypeptide is Vacuolar protein sorting-associated protein 28 homolog 2 (VPS28-2) (Arabidopsis thaliana (Mouse-ear cress)).